We begin with the raw amino-acid sequence, 506 residues long: Heat stress transcription factor A-1 (506 aa).

Residues 157–207 (MEEEIEMLKRDKNVLMQELVRLRQQQQTTDHQLQTLGKRLQGMEQRQQQMM) adopt a coiled-coil conformation. Positions 164 to 214 (LKRDKNVLMQELVRLRQQQQTTDHQLQTLGKRLQGMEQRQQQMMSFLAKAM) are hydrophobic repeat HR-A/B. The disordered stretch occupies residues 231-254 (RRRIVASNKKRRLPKQDGSLDSES). Basic residues predominate over residues 232–243 (RRIVASNKKRRL). The short motif at 239-242 (KKRR) is the Nuclear localization signal element. The AHA motif lies at 449–456 (DSFWEQFL).

The protein belongs to the HSF family. Class A subfamily. In terms of assembly, homotrimer. Exhibits temperature-dependent phosphorylation.

It localises to the nucleus. Transcriptional regulator that specifically binds DNA of heat shock promoter elements (HSE). The chain is Heat stress transcription factor A-1 (HSFA1) from Oryza sativa subsp. japonica (Rice).